The following is a 250-amino-acid chain: Small ribosomal subunit protein uS3 (250 aa).

Residues 39–111 enclose the KH type-2 domain; it reads IRTLIKNHYP…KVQINIFEVK (73 aa).

Belongs to the universal ribosomal protein uS3 family. Part of the 30S ribosomal subunit. Forms a tight complex with proteins S10 and S14.

In terms of biological role, binds the lower part of the 30S subunit head. Binds mRNA in the 70S ribosome, positioning it for translation. The chain is Small ribosomal subunit protein uS3 from Phytoplasma vitis (Flavescence doree phytoplasma).